The primary structure comprises 397 residues: Cystinosin (397 aa).

The first 24 residues, 1-24 (MDFSTHRLTTLLLLLLATVALGNA), serve as a signal peptide directing secretion. Residues 25 to 126 (QSSQLTVDSH…FVRVTVAKSR (102 aa)) lie on the Lumenal side of the membrane. 2 N-linked (GlcNAc...) asparagine glycosylation sites follow: Asn43 and Asn86. The chain crosses the membrane as a helical span at residues 127-147 (ALIYTSIIFGWVYFVAWSVSF). Positions 132 to 187 (SIIFGWVYFVAWSVSFYPQIWSNYRRKSVEGLNFDFLALNIVGFTLYSMFNCGLYF) constitute a PQ-loop 1 domain. Over 148 to 167 (YPQIWSNYRRKSVEGLNFDF) the chain is Cytoplasmic. Residues 168–188 (LALNIVGFTLYSMFNCGLYFI) form a helical membrane-spanning segment. Topologically, residues 189–210 (EDLQNEYEVRYPLGVNPVMLND) are lumenal. Residues 211 to 231 (VVFSLHAMFATCITILQCFFY) form a helical membrane-spanning segment. The Cytoplasmic segment spans residues 232-239 (QRAQQRVS). The chain crosses the membrane as a helical span at residues 240–260 (FIAYGILAIFAVVVVVSAGLA). Residues 261–263 (GGS) lie on the Lumenal side of the membrane. The helical transmembrane segment at 264 to 284 (VIHWLDFLYYCSYVKLTITII) threads the bilayer. The PQ-loop 2 domain occupies 271 to 327 (LYYCSYVKLTITIIKYVPQALMNYRRKSTSGWSIGNILLDFTGGTLSMLQMILNAHN). At 285–302 (KYVPQALMNYRRKSTSGW) the chain is on the cytoplasmic side. A helical transmembrane segment spans residues 303 to 323 (SIGNILLDFTGGTLSMLQMIL). Residues 324 to 340 (NAHNYDDWVSIFGDPTK) are Lumenal-facing. Residues 341 to 361 (FGLGLFSVLFDVFFMLQHYVF) form a helical membrane-spanning segment. At 362 to 397 (YRHSRESSSSDLTTVTDVQNRTNESPPPSEVTTEKY) the chain is on the cytoplasmic side. Positions 373–385 (LTTVTDVQNRTNE) are enriched in polar residues. The interval 373–397 (LTTVTDVQNRTNESPPPSEVTTEKY) is disordered.

The protein belongs to the cystinosin family.

The protein localises to the lysosome membrane. It carries out the reaction L-cystine(out) + H(+)(out) = L-cystine(in) + H(+)(in). Functionally, cystine/H(+) symporter that mediates export of cystine, the oxidized dimer of cysteine, from lysosomes. Involved in cysteine homeostasis during periods of fasting, which indirectly regulates mTORC1-mediated signaling by supporting de novo CoA synthesis, the TCA cycle and amino acid metabolism during periods of food shortage. Important for maintaining autophagy, and for development and survival during periods of fasting. The protein is Cystinosin of Drosophila melanogaster (Fruit fly).